Consider the following 603-residue polypeptide: Terpenoid synthase 22 (603 aa).

Residues Asp356, Asp360, Asn500, and Glu508 each coordinate Mg(2+). Positions 356 to 360 (DDTCD) match the DDXXD motif motif.

This sequence belongs to the terpene synthase family. Tpsa subfamily. The cofactor is Mg(2+). Mn(2+) serves as cofactor. In terms of tissue distribution, predominantly expressed in siliques but also in flowers.

It is found in the cytoplasm. Its pathway is secondary metabolite biosynthesis; terpenoid biosynthesis. Its function is as follows. Involved in terpene biosynthesis in roots. Possesses sesquiterpene (C15) synthase activity in vitro. Does not seem to be involved in diterpene (C20) biosynthesis. The protein is Terpenoid synthase 22 of Arabidopsis thaliana (Mouse-ear cress).